Consider the following 108-residue polypeptide: MSGRGKVKSEPMKVVFINTQYVETDARSFKTVVQELTGKNAIVAAGPFDSPSAFDGRCYDGGSKIGEDTRQLHGGGGGGGRMGTTTEFDRLFKEMPHMEELYKLWSEY.

Residues 29–38 (FKTVVQELTG) carry the VQ motif. The interval 65 to 85 (IGEDTRQLHGGGGGGGRMGTT) is disordered. Positions 73–82 (HGGGGGGGRM) are enriched in gly residues.

In terms of assembly, interacts with WRKY25, WRKY26 and WRKY33.

It localises to the nucleus. In terms of biological role, may modulate WRKY transcription factor activities. This is VQ motif-containing protein 10 from Arabidopsis thaliana (Mouse-ear cress).